The chain runs to 290 residues: Pantothenate synthetase (290 aa).

An ATP-binding site is contributed by 34 to 41 (MGNLHDGH). Catalysis depends on H41, which acts as the Proton donor. Q65 contacts (R)-pantoate. Q65 contributes to the beta-alanine binding site. An ATP-binding site is contributed by 156–159 (GKKD). Q162 is a (R)-pantoate binding site. ATP contacts are provided by residues A185 and 193-196 (LSSR).

Belongs to the pantothenate synthetase family. Homodimer.

Its subcellular location is the cytoplasm. The enzyme catalyses (R)-pantoate + beta-alanine + ATP = (R)-pantothenate + AMP + diphosphate + H(+). It functions in the pathway cofactor biosynthesis; (R)-pantothenate biosynthesis; (R)-pantothenate from (R)-pantoate and beta-alanine: step 1/1. Functionally, catalyzes the condensation of pantoate with beta-alanine in an ATP-dependent reaction via a pantoyl-adenylate intermediate. The chain is Pantothenate synthetase from Acidovorax ebreus (strain TPSY) (Diaphorobacter sp. (strain TPSY)).